The following is a 491-amino-acid chain: Bifunctional protein HldE (491 aa).

Residues 1 to 330 (MDRKMVESLF…AAVSLEHRDS (330 aa)) are ribokinase. 205–208 (NRKE) contributes to the ATP binding site. Aspartate 275 is an active-site residue. The segment at 356–491 (FTNGCFDLLH…KVLERYTDEQ (136 aa)) is cytidylyltransferase.

The protein in the N-terminal section; belongs to the carbohydrate kinase PfkB family. It in the C-terminal section; belongs to the cytidylyltransferase family. In terms of assembly, homodimer.

The enzyme catalyses D-glycero-beta-D-manno-heptose 7-phosphate + ATP = D-glycero-beta-D-manno-heptose 1,7-bisphosphate + ADP + H(+). It carries out the reaction D-glycero-beta-D-manno-heptose 1-phosphate + ATP + H(+) = ADP-D-glycero-beta-D-manno-heptose + diphosphate. It functions in the pathway nucleotide-sugar biosynthesis; ADP-L-glycero-beta-D-manno-heptose biosynthesis; ADP-L-glycero-beta-D-manno-heptose from D-glycero-beta-D-manno-heptose 7-phosphate: step 1/4. The protein operates within nucleotide-sugar biosynthesis; ADP-L-glycero-beta-D-manno-heptose biosynthesis; ADP-L-glycero-beta-D-manno-heptose from D-glycero-beta-D-manno-heptose 7-phosphate: step 3/4. Catalyzes the phosphorylation of D-glycero-D-manno-heptose 7-phosphate at the C-1 position to selectively form D-glycero-beta-D-manno-heptose-1,7-bisphosphate. Its function is as follows. Catalyzes the ADP transfer from ATP to D-glycero-beta-D-manno-heptose 1-phosphate, yielding ADP-D-glycero-beta-D-manno-heptose. This is Bifunctional protein HldE from Trichlorobacter lovleyi (strain ATCC BAA-1151 / DSM 17278 / SZ) (Geobacter lovleyi).